The following is a 667-amino-acid chain: Bicarbonate transport ATP-binding protein CmpC (667 aa).

In terms of domain architecture, ABC transporter spans 5-239 (VAVDNIDKVF…RPRKRMEVVE (235 aa)). An ATP-binding site is contributed by 42–49 (GHSGCGKS). The interval 281-667 (LELGYVPLVA…DNPTPAPVFA (387 aa)) is cmpA-like.

Belongs to the ABC transporter superfamily. Nitrate/nitrite/cyanate uptake transporter (NitT) (TC 3.A.1.16) family. The complex is composed of two ATP-binding proteins (CmpC and CmpD), a transmembrane protein (CmpB) and a solute-binding protein (CmpA).

It localises to the cell inner membrane. In terms of biological role, part of the ABC transporter complex CmpABCD involved in bicarbonate transport. Responsible for energy coupling to the transport system. The protein is Bicarbonate transport ATP-binding protein CmpC (cmpC) of Synechocystis sp. (strain ATCC 27184 / PCC 6803 / Kazusa).